A 393-amino-acid polypeptide reads, in one-letter code: Methylthioribose kinase (393 aa).

Residues N38, K53, and 107–109 each bind ATP; that span reads EDL. D225 is a binding site for substrate. 242-244 contacts ATP; that stretch reads DPE. R332 lines the substrate pocket.

The protein belongs to the methylthioribose kinase family. In terms of assembly, homodimer.

The catalysed reaction is 5-(methylsulfanyl)-D-ribose + ATP = 5-(methylsulfanyl)-alpha-D-ribose 1-phosphate + ADP + H(+). The protein operates within amino-acid biosynthesis; L-methionine biosynthesis via salvage pathway; S-methyl-5-thio-alpha-D-ribose 1-phosphate from S-methyl-5'-thioadenosine (hydrolase route): step 2/2. Its function is as follows. Catalyzes the phosphorylation of methylthioribose into methylthioribose-1-phosphate. The chain is Methylthioribose kinase from Bacillus anthracis (strain A0248).